The sequence spans 393 residues: UDP-galactose translocator (393 aa).

Helical transmembrane passes span 3 to 23, 37 to 57, 65 to 85, 97 to 117, 140 to 160, 169 to 189, 200 to 220, 238 to 258, 269 to 289, and 315 to 335; these read AVGS…AGAL, YISL…IRYA, FFAT…CLLL, LVLF…KLAV, TFQV…VLML, WASL…QAGG, GVGL…GVYF, LGLF…GTAV, PAVW…AVVV, and LFGF…IGAV. Residues 353 to 393 are disordered; the sequence is APTSGPCTHQQPPGQPPPPQLSSHHGDLSTEPFLPKSVLVK.

The protein belongs to the nucleotide-sugar transporter family. SLC35A subfamily. Interacts with SLC35A3; the interaction is reduced in the presence of SLC35A4. Found in a complex with SLC35A3 and SLC35A4.

It localises to the golgi apparatus membrane. It catalyses the reaction UMP(out) + UDP-alpha-D-galactose(in) = UMP(in) + UDP-alpha-D-galactose(out). It carries out the reaction UDP-N-acetyl-alpha-D-galactosamine(in) + UMP(out) = UDP-N-acetyl-alpha-D-galactosamine(out) + UMP(in). The catalysed reaction is UMP(out) + UDP-alpha-D-glucose(in) = UMP(in) + UDP-alpha-D-glucose(out). The enzyme catalyses UMP(out) + UDP-N-acetyl-alpha-D-glucosamine(in) = UMP(in) + UDP-N-acetyl-alpha-D-glucosamine(out). It catalyses the reaction UDP-alpha-D-galactose(in) + AMP(out) = UDP-alpha-D-galactose(out) + AMP(in). It carries out the reaction UDP-alpha-D-galactose(in) + CMP(out) = UDP-alpha-D-galactose(out) + CMP(in). The catalysed reaction is UDP-N-acetyl-alpha-D-galactosamine(out) + UDP-alpha-D-galactose(in) = UDP-N-acetyl-alpha-D-galactosamine(in) + UDP-alpha-D-galactose(out). The enzyme catalyses UDP-N-acetyl-alpha-D-glucosamine(out) + UDP-alpha-D-galactose(in) = UDP-N-acetyl-alpha-D-glucosamine(in) + UDP-alpha-D-galactose(out). It catalyses the reaction UDP-alpha-D-galactose(in) + UDP-alpha-D-glucose(out) = UDP-alpha-D-galactose(out) + UDP-alpha-D-glucose(in). It carries out the reaction UMP(out) + CMP(in) = UMP(in) + CMP(out). The catalysed reaction is UMP(out) + AMP(in) = UMP(in) + AMP(out). Transports uridine diphosphate galactose (UDP-galactose) from the cytosol into the Golgi apparatus, functioning as an antiporter that exchanges UDP-galactose for UMP. It is also able to exchange UDP-galactose for AMP and CMP, and to transport UDP-N-acetylgalactosamine (UDP-GalNAc) and other nucleotide sugars. As a provider of UDP-galactose to galactosyltransferases present in the Golgi apparatus, it is necessary for globotriaosylceramide/globoside (Gb3Cer) synthesis from lactosylceramide. The chain is UDP-galactose translocator from Bos taurus (Bovine).